The primary structure comprises 205 residues: Polyamine-modulated factor 1 (205 aa).

The segment at 1–30 is disordered; sequence MAEASSANLGSGCEEKRHEGSSSESVPPGT. The stretch at 141–193 forms a coiled coil; sequence FLQQRDTLRRHVQKQEAENQQLADAVLAGRRQVEELQLQVQAQQQAWQALHRE.

As to quaternary structure, component of the MIS12 complex composed of MIS12, DSN1, NSL1 and PMF1. Interacts with COPS7A. Interacts via its coiled-coil domain with the leucine-zipper domain of NFE2L2. The interaction with NFE2L2 is required for the transcriptional regulation of SSAT. As to expression, highest levels of expression in heart and skeletal muscle, with significant levels expressed in kidney and liver.

The protein localises to the nucleus. It is found in the chromosome. The protein resides in the centromere. Its subcellular location is the kinetochore. Its function is as follows. Part of the MIS12 complex which is required for normal chromosome alignment and segregation and kinetochore formation during mitosis. May act as a cotranscription partner of NFE2L2 involved in regulation of polyamine-induced transcription of SSAT. This chain is Polyamine-modulated factor 1, found in Homo sapiens (Human).